The primary structure comprises 159 residues: Transcription elongation factor GreA (159 aa).

Residues 14–76 (IKKLENELEY…QLENMLKNAS (63 aa)) are a coiled coil.

It belongs to the GreA/GreB family.

Functionally, necessary for efficient RNA polymerase transcription elongation past template-encoded arresting sites. The arresting sites in DNA have the property of trapping a certain fraction of elongating RNA polymerases that pass through, resulting in locked ternary complexes. Cleavage of the nascent transcript by cleavage factors such as GreA or GreB allows the resumption of elongation from the new 3'terminus. GreA releases sequences of 2 to 3 nucleotides. The chain is Transcription elongation factor GreA from Clostridium kluyveri (strain NBRC 12016).